A 218-amino-acid chain; its full sequence is 2-phospho-L-lactate guanylyltransferase (218 aa).

This sequence belongs to the CofC family. As to quaternary structure, homodimer.

It carries out the reaction (2S)-2-phospholactate + GTP + H(+) = (2S)-lactyl-2-diphospho-5'-guanosine + diphosphate. Its pathway is cofactor biosynthesis; coenzyme F420 biosynthesis. Its function is as follows. Guanylyltransferase that catalyzes the activation of (2S)-2-phospholactate (2-PL) as (2S)-lactyl-2-diphospho-5'-guanosine, via the condensation of 2-PL with GTP. It is involved in the biosynthesis of coenzyme F420, a hydride carrier cofactor. This Methanocaldococcus fervens (strain DSM 4213 / JCM 15782 / AG86) (Methanococcus fervens) protein is 2-phospho-L-lactate guanylyltransferase.